The following is a 276-amino-acid chain: Carbonic anhydrase Nec1 (276 aa).

A signal peptide spans 1–27 (MKMINSIFTHGSLIILLLLFHSISIKA). In terms of domain architecture, Alpha-carbonic anhydrase spans 34 to 270 (REFDYLEGSE…LNHREVQLHC (237 aa)). An intrachain disulfide couples Cys-59 to Cys-220. His-98 functions as the Proton acceptor in the catalytic mechanism. Zn(2+) is bound by residues His-124 and His-126. Asn-134 carries N-linked (GlcNAc...) asparagine glycosylation. Residue His-143 coordinates Zn(2+). Residues 216–217 (TT) are substrate binding.

Belongs to the alpha-class carbonic anhydrase family. In terms of assembly, homodimer. Requires Zn(2+) as cofactor. In terms of tissue distribution, confined to nectaries.

It catalyses the reaction hydrogencarbonate + H(+) = CO2 + H2O. The protein operates within one-carbon metabolism. Involved in the production of blood-red nectar containing the alkaloid nesocodin and that serves as a visual attractant for pollinator visitation, including vertebrates such as Phelsuma geckos. The nectar is initially acidic and pale yellow, but slowly becomes alkaline before turning into red within 24 hours. Together with NEC2 and NEC3, facilitates the condensation of sinapaldehyde ((E)-3,5-dimethoxy-4-hydroxycinnamaldehyde) and proline to form nesocodin, a pigment with a stable imine bond. Mediates the alkalinization (pH increase) of the flower nectar by catalyzing the reversible hydration of carbon dioxide. This chain is Carbonic anhydrase Nec1, found in Nesocodon mauritianus (Blue Mauritius bellflower).